The sequence spans 139 residues: Protein COLD-REGULATED 15A, chloroplastic (139 aa).

A chloroplast-targeting transit peptide spans M1–V40.

It belongs to the COR15 protein family. As to quaternary structure, forms homooligomers which interact with potential stromal substrates in the stroma of chloroplasts. Interacts with the galactose headgroup of the chloroplast lipid monogalactosyldiacylglycerol (MGDG).

The protein resides in the plastid. Its subcellular location is the chloroplast stroma. Its function is as follows. Exhibits cryoprotective activity toward stromal substrates (e.g. LDH and rubisco) in chloroplasts and in protoplasts and confers freezing tolerance to plants in a CBF-dependent manner. Protectant against various stresses (e.g. cold, drought and heat stress) by preventing protein aggregation (e.g. LDH) and attenuating enzyme inactivation. Influences the intrinsic curvature of the inner membrane of the chloroplast envelope, and modulates the freeze-induced lamellar-to-hexagonal II phase transitions that occur in regions where the plasma membrane is brought into close apposition with the chloroplast envelope during freeze-induced osmotic contraction. Mediates a shift in the melting curves of phospholipids-containing membranes to lower temperatures. Involved in the regulation of leaf senescence by abscisic acid (ABA) in a VNI2-dependent manner. This chain is Protein COLD-REGULATED 15A, chloroplastic, found in Arabidopsis thaliana (Mouse-ear cress).